We begin with the raw amino-acid sequence, 473 residues long: ATP synthase subunit beta (473 aa).

158 to 165 (GGAGVGKT) contacts ATP.

It belongs to the ATPase alpha/beta chains family. As to quaternary structure, F-type ATPases have 2 components, CF(1) - the catalytic core - and CF(0) - the membrane proton channel. CF(1) has five subunits: alpha(3), beta(3), gamma(1), delta(1), epsilon(1). CF(0) has three main subunits: a(1), b(2) and c(9-12). The alpha and beta chains form an alternating ring which encloses part of the gamma chain. CF(1) is attached to CF(0) by a central stalk formed by the gamma and epsilon chains, while a peripheral stalk is formed by the delta and b chains.

It is found in the cell membrane. It catalyses the reaction ATP + H2O + 4 H(+)(in) = ADP + phosphate + 5 H(+)(out). Produces ATP from ADP in the presence of a proton gradient across the membrane. The catalytic sites are hosted primarily by the beta subunits. In Geobacillus sp. (strain WCH70), this protein is ATP synthase subunit beta.